Here is a 415-residue protein sequence, read N- to C-terminus: Acetate kinase (415 aa).

Asn-8 is a Mg(2+) binding site. Position 15 (Lys-15) interacts with ATP. Substrate is bound at residue Arg-106. Catalysis depends on Asp-163, which acts as the Proton donor/acceptor. ATP-binding positions include 222 to 226, 296 to 298, and 344 to 348; these read HLGNG, DLR, and GIGEN. Glu-397 provides a ligand contact to Mg(2+).

Belongs to the acetokinase family. In terms of assembly, homodimer. Mg(2+) is required as a cofactor. The cofactor is Mn(2+).

It localises to the cytoplasm. It catalyses the reaction acetate + ATP = acetyl phosphate + ADP. It participates in metabolic intermediate biosynthesis; acetyl-CoA biosynthesis; acetyl-CoA from acetate: step 1/2. In terms of biological role, catalyzes the formation of acetyl phosphate from acetate and ATP. Can also catalyze the reverse reaction. The protein is Acetate kinase of Thermosynechococcus vestitus (strain NIES-2133 / IAM M-273 / BP-1).